Reading from the N-terminus, the 463-residue chain is Serine carboxypeptidase-like 32 (463 aa).

Positions 1–22 (MMNISNVSIALYLCTLFAFVSS) are cleaved as a signal peptide. 3 disulfide bridges follow: Cys-86–Cys-345, Cys-249–Cys-262, and Cys-286–Cys-313. An N-linked (GlcNAc...) asparagine glycan is attached at Asn-137. The active site involves Ser-179. Asn-201 and Asn-250 each carry an N-linked (GlcNAc...) asparagine glycan. N-linked (GlcNAc...) asparagine glycosylation is found at Asn-341 and Asn-354. Catalysis depends on residues Asp-384 and His-436.

It belongs to the peptidase S10 family. Expressed in flowers.

The protein resides in the secreted. Functionally, probable carboxypeptidase. This is Serine carboxypeptidase-like 32 (SCPL32) from Arabidopsis thaliana (Mouse-ear cress).